Here is a 472-residue protein sequence, read N- to C-terminus: Adenosylhomocysteinase (472 aa).

Substrate-binding residues include T61, D136, and E196. 197–199 provides a ligand contact to NAD(+); sequence TTT. Residues K226 and D230 each coordinate substrate. Residues N231, 260 to 265, E283, N318, 339 to 341, and N384 each bind NAD(+); these read GYGDVG and IGH.

It belongs to the adenosylhomocysteinase family. Requires NAD(+) as cofactor.

The protein localises to the cytoplasm. The catalysed reaction is S-adenosyl-L-homocysteine + H2O = L-homocysteine + adenosine. It participates in amino-acid biosynthesis; L-homocysteine biosynthesis; L-homocysteine from S-adenosyl-L-homocysteine: step 1/1. Its function is as follows. May play a key role in the regulation of the intracellular concentration of adenosylhomocysteine. In Cupriavidus necator (strain ATCC 17699 / DSM 428 / KCTC 22496 / NCIMB 10442 / H16 / Stanier 337) (Ralstonia eutropha), this protein is Adenosylhomocysteinase.